Consider the following 203-residue polypeptide: Glycerol-3-phosphate acyltransferase (203 aa).

4 helical membrane passes run 6–26, 82–102, 118–138, and 141–161; these read LTLL…AVLV, AISL…PIFF, APIG…LLLI, and YSSL…WWLD.

It belongs to the PlsY family. As to quaternary structure, probably interacts with PlsX.

It localises to the cell inner membrane. It catalyses the reaction an acyl phosphate + sn-glycerol 3-phosphate = a 1-acyl-sn-glycero-3-phosphate + phosphate. Its pathway is lipid metabolism; phospholipid metabolism. Catalyzes the transfer of an acyl group from acyl-phosphate (acyl-PO(4)) to glycerol-3-phosphate (G3P) to form lysophosphatidic acid (LPA). This enzyme utilizes acyl-phosphate as fatty acyl donor, but not acyl-CoA or acyl-ACP. The sequence is that of Glycerol-3-phosphate acyltransferase from Shewanella putrefaciens (strain CN-32 / ATCC BAA-453).